A 206-amino-acid polypeptide reads, in one-letter code: Protease (206 aa).

Catalysis depends on residues His54, Asp71, and Cys122.

It belongs to the peptidase C5 family. As to quaternary structure, interacts with protease cofactor pVI-C; this interaction is necessary for protease activation.

The protein localises to the virion. The protein resides in the host nucleus. The enzyme catalyses Cleaves proteins of the adenovirus and its host cell at two consensus sites: -Yaa-Xaa-Gly-Gly-|-Xaa- and -Yaa-Xaa-Gly-Xaa-|-Gly- (in which Yaa is Met, Ile or Leu, and Xaa is any amino acid).. Its activity is regulated as follows. Requires DNA and protease cofactor for maximal activation. Inside nascent virions, becomes partially activated by binding to the viral DNA, allowing it to cleave the cofactor that binds to the protease and fully activates it. Actin, like the viral protease cofactor, seems to act as a cofactor in the cleavage of cytokeratin 18 and of actin itself. Its function is as follows. Cleaves viral precursor proteins (pTP, pIIIa, pVI, pVII, pVIII, and pX) inside newly assembled particles giving rise to mature virions. Protease complexed to its cofactor slides along the viral DNA to specifically locate and cleave the viral precursors. Mature virions have a weakened organization compared to the unmature virions, thereby facilitating subsequent uncoating. Without maturation, the particle lacks infectivity and is unable to uncoat. Late in adenovirus infection, in the cytoplasm, may participate in the cytoskeleton destruction. Cleaves host cell cytoskeletal keratins K7 and K18. The protein is Protease of Homo sapiens (Human).